We begin with the raw amino-acid sequence, 196 residues long: MARLHSAVVLALALSSLLTEIAADCDVVSKKQWDGLIPVHVSYLARPVSLVIVQHTVTPFCRTDAGCEELVRNIQTNHMEALQYWDIGPSFLVGGNGKVYEGSGWLHVGAHTYGYNSRSIGVAFIGNFNTDEPSGAMLEALRSLLRCGVERGHLAGDYRAVAHRQLIASESPGRKLYNQIRRWPEWLENVDSIKNA.

The N-terminal stretch at 1–23 (MARLHSAVVLALALSSLLTEIAA) is a signal peptide. Cystine bridges form between Cys25–Cys147 and Cys61–Cys67. The N-acetylmuramoyl-L-alanine amidase domain maps to 46–173 (RPVSLVIVQH…RQLIASESPG (128 aa)).

The protein belongs to the N-acetylmuramoyl-L-alanine amidase 2 family. Monomer. As to expression, constitutively expressed in fat body, epithelial cells and hemocytes. Not detected in Malpighian tubules, silk gland or midgut.

Its function is as follows. Binds specifically to peptidoglycan and triggers the propenoloxidase cascade which is an important insect defense mechanism. This is Peptidoglycan recognition protein from Bombyx mori (Silk moth).